We begin with the raw amino-acid sequence, 308 residues long: UDP-3-O-acyl-N-acetylglucosamine deacetylase (308 aa).

H78, H235, and D239 together coordinate Zn(2+). Catalysis depends on H262, which acts as the Proton donor.

This sequence belongs to the LpxC family. The cofactor is Zn(2+).

The enzyme catalyses a UDP-3-O-[(3R)-3-hydroxyacyl]-N-acetyl-alpha-D-glucosamine + H2O = a UDP-3-O-[(3R)-3-hydroxyacyl]-alpha-D-glucosamine + acetate. The protein operates within glycolipid biosynthesis; lipid IV(A) biosynthesis; lipid IV(A) from (3R)-3-hydroxytetradecanoyl-[acyl-carrier-protein] and UDP-N-acetyl-alpha-D-glucosamine: step 2/6. Catalyzes the hydrolysis of UDP-3-O-myristoyl-N-acetylglucosamine to form UDP-3-O-myristoylglucosamine and acetate, the committed step in lipid A biosynthesis. This is UDP-3-O-acyl-N-acetylglucosamine deacetylase from Anaeromyxobacter dehalogenans (strain 2CP-C).